Consider the following 133-residue polypeptide: Small ribosomal subunit protein eS8 (133 aa).

The disordered stretch occupies residues 1 to 34 (MGVWHGRSLRKPTGGRIRPHRKKRKFEMGNPPTE).

This sequence belongs to the eukaryotic ribosomal protein eS8 family. In terms of assembly, part of the 30S ribosomal subunit.

The protein is Small ribosomal subunit protein eS8 of Methanopyrus kandleri (strain AV19 / DSM 6324 / JCM 9639 / NBRC 100938).